Reading from the N-terminus, the 495-residue chain is Glutamyl-tRNA(Gln) amidotransferase subunit A (495 aa).

Residues lysine 79 and serine 159 each act as charge relay system in the active site. Serine 183 functions as the Acyl-ester intermediate in the catalytic mechanism.

This sequence belongs to the amidase family. GatA subfamily. In terms of assembly, heterotrimer of A, B and C subunits.

It carries out the reaction L-glutamyl-tRNA(Gln) + L-glutamine + ATP + H2O = L-glutaminyl-tRNA(Gln) + L-glutamate + ADP + phosphate + H(+). In terms of biological role, allows the formation of correctly charged Gln-tRNA(Gln) through the transamidation of misacylated Glu-tRNA(Gln) in organisms which lack glutaminyl-tRNA synthetase. The reaction takes place in the presence of glutamine and ATP through an activated gamma-phospho-Glu-tRNA(Gln). In Gluconobacter oxydans (strain 621H) (Gluconobacter suboxydans), this protein is Glutamyl-tRNA(Gln) amidotransferase subunit A.